Consider the following 904-residue polypeptide: Translation initiation factor IF-2 (904 aa).

3 disordered regions span residues 102–122 (TYVK…PDEE), 134–252 (RQRN…MVAG), and 267–316 (HLSA…ERPT). Basic and acidic residues predominate over residues 134–177 (RQRNLEEQQRLAESDRVRDEAIQRKREEEQAAKDRAEAERKAAE). The span at 178-230 (EAAAAASAPAPVADAPKPSAAAPAARLPSSPSSAPRAARPAGASPASRPAAPA) shows a compositional bias: low complexity. In terms of domain architecture, tr-type G spans 403-572 (SRPPVVTIMG…SLQAEVLELK (170 aa)). The G1 stretch occupies residues 412–419 (GHVDHGKT). 412 to 419 (GHVDHGKT) provides a ligand contact to GTP. The interval 437–441 (GITQH) is G2. A G3 region spans residues 458-461 (DTPG). Residues 458-462 (DTPGH) and 512-515 (NKID) contribute to the GTP site. The interval 512–515 (NKID) is G4. A G5 region spans residues 548–550 (SAK).

This sequence belongs to the TRAFAC class translation factor GTPase superfamily. Classic translation factor GTPase family. IF-2 subfamily.

The protein resides in the cytoplasm. Functionally, one of the essential components for the initiation of protein synthesis. Protects formylmethionyl-tRNA from spontaneous hydrolysis and promotes its binding to the 30S ribosomal subunits. Also involved in the hydrolysis of GTP during the formation of the 70S ribosomal complex. The protein is Translation initiation factor IF-2 of Xanthomonas axonopodis pv. citri (strain 306).